Consider the following 247-residue polypeptide: Protein GrpE (247 aa).

2 disordered regions span residues 1 to 64 and 214 to 247; these read MNDE…QALD and SMGPGPKDDGEETITEQSLEGDNTTDQQSSEKSD. Polar residues-rich tracts occupy residues 30-39, 49-63, and 228-241; these read DEPSLSNVAE, DVTSSDAKDSSSQAL, and TEQSLEGDNTTDQQ.

The protein belongs to the GrpE family. As to quaternary structure, homodimer.

The protein localises to the cytoplasm. Participates actively in the response to hyperosmotic and heat shock by preventing the aggregation of stress-denatured proteins, in association with DnaK and GrpE. It is the nucleotide exchange factor for DnaK and may function as a thermosensor. Unfolded proteins bind initially to DnaJ; upon interaction with the DnaJ-bound protein, DnaK hydrolyzes its bound ATP, resulting in the formation of a stable complex. GrpE releases ADP from DnaK; ATP binding to DnaK triggers the release of the substrate protein, thus completing the reaction cycle. Several rounds of ATP-dependent interactions between DnaJ, DnaK and GrpE are required for fully efficient folding. The polypeptide is Protein GrpE (Prochlorococcus marinus (strain MIT 9211)).